Reading from the N-terminus, the 357-residue chain is Phosphate acyltransferase (357 aa).

This sequence belongs to the PlsX family. Homodimer. Probably interacts with PlsY.

The protein localises to the cytoplasm. It carries out the reaction a fatty acyl-[ACP] + phosphate = an acyl phosphate + holo-[ACP]. The protein operates within lipid metabolism; phospholipid metabolism. In terms of biological role, catalyzes the reversible formation of acyl-phosphate (acyl-PO(4)) from acyl-[acyl-carrier-protein] (acyl-ACP). This enzyme utilizes acyl-ACP as fatty acyl donor, but not acyl-CoA. This Roseobacter denitrificans (strain ATCC 33942 / OCh 114) (Erythrobacter sp. (strain OCh 114)) protein is Phosphate acyltransferase.